The sequence spans 459 residues: Glycosyl hydrolase family 109 protein 1 (459 aa).

The tat-type signal signal peptide spans 1–31 (MHNIHRRHFLKAAGAVTAGLVTANIALNANA). Residues 64–65 (ER), Asp86, 135–138 (WEWH), 155–156 (EV), and Asn184 contribute to the NAD(+) site. Substrate contacts are provided by residues Tyr213, Arg232, 244-247 (YPTH), and Tyr326. Tyr244 lines the NAD(+) pocket.

The protein belongs to the Gfo/Idh/MocA family. Glycosyl hydrolase 109 subfamily. NAD(+) serves as cofactor. Post-translationally, predicted to be exported by the Tat system. The position of the signal peptide cleavage has not been experimentally proven.

In terms of biological role, glycosidase. This chain is Glycosyl hydrolase family 109 protein 1, found in Shewanella sp. (strain MR-7).